Reading from the N-terminus, the 130-residue chain is Small ribosomal subunit protein uS9 (130 aa).

It belongs to the universal ribosomal protein uS9 family.

The sequence is that of Small ribosomal subunit protein uS9 from Xanthomonas oryzae pv. oryzae (strain MAFF 311018).